The following is a 619-amino-acid chain: Chaperone protein HscA homolog (619 aa).

Belongs to the heat shock protein 70 family.

Chaperone involved in the maturation of iron-sulfur cluster-containing proteins. Has a low intrinsic ATPase activity which is markedly stimulated by HscB. This Acinetobacter baumannii (strain ACICU) protein is Chaperone protein HscA homolog.